Here is an 88-residue protein sequence, read N- to C-terminus: Augerpeptide Hhe9a (88 aa).

The signal sequence occupies residues 1–21 (MMTKTGLVLLFAFLLVFPVSS). The propeptide occupies 22–49 (LPMDAEAGHARLEMDKRDAGNEAWTRLL). Intrachain disulfides connect cysteine 56-cysteine 71, cysteine 61-cysteine 73, and cysteine 67-cysteine 86.

As to expression, expressed by the venom duct.

The protein localises to the secreted. The chain is Augerpeptide Hhe9a from Hastula hectica (Sea snail).